The sequence spans 131 residues: Large ribosomal subunit protein uL18 (131 aa).

It belongs to the universal ribosomal protein uL18 family. Part of the 50S ribosomal subunit; part of the 5S rRNA/L5/L18/L25 subcomplex. Contacts the 5S and 23S rRNAs.

Its function is as follows. This is one of the proteins that bind and probably mediate the attachment of the 5S RNA into the large ribosomal subunit, where it forms part of the central protuberance. In Corynebacterium kroppenstedtii (strain DSM 44385 / JCM 11950 / CIP 105744 / CCUG 35717), this protein is Large ribosomal subunit protein uL18.